A 230-amino-acid polypeptide reads, in one-letter code: Thymidylate kinase (230 aa).

Residue 20-27 (GGEGAGKS) coordinates ATP.

Belongs to the thymidylate kinase family.

It carries out the reaction dTMP + ATP = dTDP + ADP. In terms of biological role, phosphorylation of dTMP to form dTDP in both de novo and salvage pathways of dTTP synthesis. The sequence is that of Thymidylate kinase from Rhodopseudomonas palustris (strain TIE-1).